Reading from the N-terminus, the 253-residue chain is Sulfate transporter CysZ (253 aa).

A run of 4 helical transmembrane segments spans residues 31–51 (FVIL…WWLF), 75–95 (LLWP…FSTI), 151–171 (IVLL…PVLW), and 222–242 (IPLL…AMWV).

It belongs to the CysZ family.

It localises to the cell inner membrane. Its function is as follows. High affinity, high specificity proton-dependent sulfate transporter, which mediates sulfate uptake. Provides the sulfur source for the cysteine synthesis pathway. This Shigella dysenteriae serotype 1 (strain Sd197) protein is Sulfate transporter CysZ.